Here is a 921-residue protein sequence, read N- to C-terminus: Respiratory burst oxidase homolog protein D (921 aa).

Residues 1–71 form a disordered region; the sequence is MKMRRGNSSN…RSNSVAGGRG (71 aa). The Cytoplasmic portion of the chain corresponds to 1–376; that stretch reads MKMRRGNSSN…KYFILDNWQR (376 aa). A phosphoserine mark is found at S8, S9, S26, and S39. The segment covering 21-31 has biased composition (polar residues); that stretch reads NSDTNSDTESI. The segment covering 44–53 has biased composition (basic residues); that stretch reads RPKRASKKNA. EF-hand-like regions lie at residues 193–203 and 230–241; these read SADSNGLLLSA and NNVSGDAITKEQ. EF-hand domains follow at residues 253-288 and 297-332; these read SFDA…SASA and QAKE…APNQ. Ca(2+) is bound by residues D266, D268, D270, R272, and E277. 3 positions are modified to phosphoserine: S339, S343, and S347. A helical membrane pass occupies residues 377–397; that stretch reads LWIMMLWLGICGGLFTYKFIQ. Over 398–461 the chain is Extracellular; the sequence is YKNKAAYGVM…FDDSLNFHKV (64 aa). One can recognise a Ferric oxidoreductase domain in the interval 415–572; sequence KGGAETLKFN…LFIIVYALLI (158 aa). A helical transmembrane segment spans residues 462 to 482; the sequence is IASGIVVGVLLHAGAHLTCDF. The Cytoplasmic portion of the chain corresponds to 483 to 516; it reads PRLIAADEDTYEPMEKYFGDQPTSYWWFVKGVEG. The helical transmembrane segment at 517–537 threads the bilayer; sequence WTGIVMVVLMAIAFTLATPWF. At 538-559 the chain is on the extracellular side; sequence RRNKLNLPNFLKKLTGFNAFWY. Residues 560-580 form a helical membrane-spanning segment; it reads THHLFIIVYALLIVHGIKLYL. Topologically, residues 581 to 588 are cytoplasmic; it reads TKIWYQKT. The chain crosses the membrane as a helical span at residues 589 to 606; the sequence is TWMYLAVPILLYASERLL. The Extracellular portion of the chain corresponds to 607-734; sequence RAFRSSIKPV…PYGAPAQDYK (128 aa). Residues 611–732 enclose the FAD-binding FR-type domain; it reads SSIKPVKMIK…DGPYGAPAQD (122 aa). A helical transmembrane segment spans residues 735 to 755; the sequence is KYDVVLLVGLGIGATPMISIL. The Cytoplasmic portion of the chain corresponds to 756 to 921; the sequence is KDIINNMKGP…TKFDFHKENF (166 aa).

It belongs to the RBOH (TC 5.B.1.3) family. Monomer and homodimer. Interacts with BIK1 and FLS2. Interacts with PBL13. Binds to SIK1 upon flagellin perception and becomes activated by phosphorylation. In terms of processing, phosphorylated at Ser-39, Ser-343 and Ser-347 by BIK1 upon flagellin (flg22) treatment. Activated by phosphorylation at Ser-347 mediated by SIK1 and at Ser-8, Ser-9 and Ser-339 upon flagellin (e.g. flg22) perception. In terms of tissue distribution, more abundant in roots than in leaves, stems or inflorescences. Expressed in mesophyll and guard cells.

It is found in the membrane. Inhibited by diphenylene iodinium (DPI). In terms of biological role, calcium-dependent NADPH oxidase that generates superoxide. Involved in the generation of reactive oxygen species (ROS) during incompatible interactions with pathogens, in response to pathogen-associated molecular pattern (PAMP)-triggered immunity (PTI) signaling and in UV-B and abscisic acid ROS-dependent signaling and via SIK1 mediated activation by phosphorylation. Might be required for ROS signal amplification during light stress. The polypeptide is Respiratory burst oxidase homolog protein D (Arabidopsis thaliana (Mouse-ear cress)).